The following is a 96-amino-acid chain: Transcription and mRNA export factor SUS1 (96 aa).

It belongs to the ENY2 family. Component of the nuclear pore complex (NPC)-associated TREX-2 complex (transcription and export complex 2), composed of at least SUS1, SAC3, THP1, SEM1, and CDC31. TREX-2 contains 2 SUS1 chains. The TREX-2 complex interacts with the nucleoporin NUP1. Component of the 1.8 MDa SAGA transcription coactivator-HAT complex. SAGA is built of 5 distinct domains with specialized functions. Within the SAGA complex, SUS1, SGF11, SGF73 and UBP8 form an additional subcomplex of SAGA called the DUB module (deubiquitination module). Interacts directly with THP1, SAC3, SGF11, and with the RNA polymerase II.

Its subcellular location is the nucleus. The protein localises to the nucleoplasm. The protein resides in the cytoplasm. It localises to the P-body. Functionally, involved in mRNA export coupled transcription activation by association with both the TREX-2 and the SAGA complexes. At the promoters, SAGA is required for recruitment of the basal transcription machinery. It influences RNA polymerase II transcriptional activity through different activities such as TBP interaction and promoter selectivity, interaction with transcription activators, and chromatin modification through histone acetylation and deubiquitination. Within the SAGA complex, participates in a subcomplex required for deubiquitination of H2B and for the maintenance of steady-state H3 methylation levels. The TREX-2 complex functions in docking export-competent ribonucleoprotein particles (mRNPs) to the nuclear entrance of the nuclear pore complex (nuclear basket). TREX-2 participates in mRNA export and accurate chromatin positioning in the nucleus by tethering genes to the nuclear periphery. May also be involved in cytoplasmic mRNA decay by interaction with components of P-bodies. This chain is Transcription and mRNA export factor SUS1, found in Kluyveromyces lactis (strain ATCC 8585 / CBS 2359 / DSM 70799 / NBRC 1267 / NRRL Y-1140 / WM37) (Yeast).